The chain runs to 149 residues: Large ribosomal subunit protein uL15 (149 aa).

Positions 21 to 54 are disordered; the sequence is RGSASGLGCTSGKGNKGQNARSGGGVRPGFEGGQ. 2 stretches are compositionally biased toward gly residues: residues 23 to 35 and 42 to 52; these read SASG…GKGN and SGGGVRPGFEG.

It belongs to the universal ribosomal protein uL15 family. In terms of assembly, part of the 50S ribosomal subunit.

Binds to the 23S rRNA. The sequence is that of Large ribosomal subunit protein uL15 from Lawsonia intracellularis (strain PHE/MN1-00).